The sequence spans 114 residues: Large ribosomal subunit protein bL19 (114 aa).

Belongs to the bacterial ribosomal protein bL19 family.

This protein is located at the 30S-50S ribosomal subunit interface and may play a role in the structure and function of the aminoacyl-tRNA binding site. This Listeria welshimeri serovar 6b (strain ATCC 35897 / DSM 20650 / CCUG 15529 / CIP 8149 / NCTC 11857 / SLCC 5334 / V8) protein is Large ribosomal subunit protein bL19.